The following is a 491-amino-acid chain: Monodehydroascorbate reductase 5, chlorplastic (491 aa).

The transit peptide at 1-42 (MASTAAAASSQGCISWALRQRGLGGGGARAVPVLPRRRFCVS) directs the protein to the chloroplast. FAD contacts are provided by residues 61 to 64 (GGNA), Glu-88, Arg-95, Lys-100, and 194 to 195 (RD). NAD(+) contacts are provided by residues 217–223 (GGYIGME), Glu-241, Arg-247, and Gly-306. 219-223 (YIGME) contacts NADP(+). Arg-247 and Gly-306 together coordinate NADP(+). Asp-344 contributes to the FAD binding site. 360–361 (EH) serves as a coordination point for NAD(+). 360-361 (EH) contributes to the NADP(+) binding site. Val-362 contributes to the FAD binding site. An L-ascorbate-binding site is contributed by Arg-366. Tyr-391 serves as a coordination point for FAD. Tyr-391 is a binding site for NAD(+). Tyr-391 contacts NADP(+). Arg-393 is a binding site for L-ascorbate.

This sequence belongs to the FAD-dependent oxidoreductase family. It depends on FAD as a cofactor.

It is found in the plastid. It localises to the chloroplast. The enzyme catalyses 2 monodehydro-L-ascorbate radical + NADH + H(+) = 2 L-ascorbate + NAD(+). Its function is as follows. Catalyzes the conversion of monodehydroascorbate to ascorbate, oxidizing NADH in the process. Ascorbate is a major antioxidant against reactive oxygen species (ROS) and nitric oxide (NO). The polypeptide is Monodehydroascorbate reductase 5, chlorplastic (Oryza sativa subsp. japonica (Rice)).